Reading from the N-terminus, the 617-residue chain is uncharacterized protein (617 aa).

Composition is skewed to low complexity over residues 1 to 16 (MSKCATPTPSTSSNSS) and 36 to 45 (STTSSNGSNS). The tract at residues 1-49 (MSKCATPTPSTSSNSSDEAKRSPQPMSRGFPQRNMSTTSSNGSNSPRHR) is disordered. The next 3 helical transmembrane spans lie at 219–239 (LMIGAAGGVGGVLIGLTGGLA), 262–282 (TAGAAVLGTTMGVAGAGFTGY), and 427–447 (PITLIGFSLGARVIFHCLLTM).

Belongs to the TMCO4 family.

Its subcellular location is the membrane. This is an uncharacterized protein from Caenorhabditis elegans.